A 363-amino-acid polypeptide reads, in one-letter code: Chorismate synthase (363 aa).

NADP(+) contacts are provided by arginine 48 and arginine 54. FMN is bound by residues arginine 131–serine 133, asparagine 244–alanine 245, glycine 288, lysine 303–serine 307, and arginine 329.

This sequence belongs to the chorismate synthase family. In terms of assembly, homotetramer. Requires FMNH2 as cofactor.

It catalyses the reaction 5-O-(1-carboxyvinyl)-3-phosphoshikimate = chorismate + phosphate. It participates in metabolic intermediate biosynthesis; chorismate biosynthesis; chorismate from D-erythrose 4-phosphate and phosphoenolpyruvate: step 7/7. Functionally, catalyzes the anti-1,4-elimination of the C-3 phosphate and the C-6 proR hydrogen from 5-enolpyruvylshikimate-3-phosphate (EPSP) to yield chorismate, which is the branch point compound that serves as the starting substrate for the three terminal pathways of aromatic amino acid biosynthesis. This reaction introduces a second double bond into the aromatic ring system. The sequence is that of Chorismate synthase from Hyphomonas neptunium (strain ATCC 15444).